Reading from the N-terminus, the 446-residue chain is MTDTIFALATAAGRSAVAVVRVSGPRSSEIAAALCGRLPSPRLASVRTLKHNGVALDAALVLRFEKPASYTGEDSVEFHVHGGRAVVEALLAALSELGARLAEAGEFTRRAFENGKLDLAQAEGVADLIDAETEAQRRQALGQVGGALSQRYDRWRDLLVQALAMLEAAVDFPDEDLPEEVAERARPGLRQLSAELNAALADVSRGRRVRDGFRIALIGAPNAGKSTLLNGLAERDAAIVTDVAGTTRDVIEVPLVLGGYKVLVADTAGIRETADVIEAEGVRRAKAWAEAADLRLWVVDGFHVKQADARPEAIRVGDWLILNKTDIADADASAHVAERWAGEGLTVLHIAGTSAEGPEALRAALASHVADALSGAEFPAATRLRHAERLSEARSYLERALSDVGLEVELAAEDVRLAARALERISGRIDPEDVLGRVFSTFCIGK.

(6S)-5-formyl-5,6,7,8-tetrahydrofolate is bound by residues Arg21, Glu77, and Lys116. One can recognise a TrmE-type G domain in the interval 212–370 (GFRIALIGAP…LRAALASHVA (159 aa)). Asn222 is a binding site for K(+). Residues 222–227 (NAGKST), 241–247 (TDVAGTT), and 266–269 (DTAG) each bind GTP. Ser226 is a binding site for Mg(2+). Positions 241, 243, and 246 each coordinate K(+). A Mg(2+)-binding site is contributed by Thr247. Lys446 is a (6S)-5-formyl-5,6,7,8-tetrahydrofolate binding site.

The protein belongs to the TRAFAC class TrmE-Era-EngA-EngB-Septin-like GTPase superfamily. TrmE GTPase family. In terms of assembly, homodimer. Heterotetramer of two MnmE and two MnmG subunits. K(+) is required as a cofactor.

It localises to the cytoplasm. Its function is as follows. Exhibits a very high intrinsic GTPase hydrolysis rate. Involved in the addition of a carboxymethylaminomethyl (cmnm) group at the wobble position (U34) of certain tRNAs, forming tRNA-cmnm(5)s(2)U34. In Caulobacter vibrioides (strain ATCC 19089 / CIP 103742 / CB 15) (Caulobacter crescentus), this protein is tRNA modification GTPase MnmE.